Consider the following 325-residue polypeptide: DNA-directed RNA polymerase subunit alpha (325 aa).

Residues 1–238 are alpha N-terminal domain (alpha-NTD); the sequence is MSLKSLLKGF…EHLTVFINFE (238 aa). The segment at 254-325 is alpha C-terminal domain (alpha-CTD); that stretch reads KLKASLSKHV…LGLSFGMRDF (72 aa).

It belongs to the RNA polymerase alpha chain family. As to quaternary structure, homodimer. The RNAP catalytic core consists of 2 alpha, 1 beta, 1 beta' and 1 omega subunit. When a sigma factor is associated with the core the holoenzyme is formed, which can initiate transcription.

The enzyme catalyses RNA(n) + a ribonucleoside 5'-triphosphate = RNA(n+1) + diphosphate. Functionally, DNA-dependent RNA polymerase catalyzes the transcription of DNA into RNA using the four ribonucleoside triphosphates as substrates. The chain is DNA-directed RNA polymerase subunit alpha from Leptospira borgpetersenii serovar Hardjo-bovis (strain JB197).